The chain runs to 235 residues: RING-H2 finger protein ATL33 (235 aa).

A helical membrane pass occupies residues Leu64–Asn84. The segment at Cys87–Thr133 is disordered. Residues Ser88–Ser103 show a composition bias toward low complexity. Positions Ile116 to Ser125 are enriched in polar residues. The RING-type; atypical zinc finger occupies Cys142–Arg184. Low complexity predominate over residues Asn201–Ser216. The tract at residues Asn201–Val235 is disordered.

The protein belongs to the RING-type zinc finger family. ATL subfamily.

It localises to the membrane. The enzyme catalyses S-ubiquitinyl-[E2 ubiquitin-conjugating enzyme]-L-cysteine + [acceptor protein]-L-lysine = [E2 ubiquitin-conjugating enzyme]-L-cysteine + N(6)-ubiquitinyl-[acceptor protein]-L-lysine.. It participates in protein modification; protein ubiquitination. This is RING-H2 finger protein ATL33 (ATL33) from Arabidopsis thaliana (Mouse-ear cress).